A 178-amino-acid chain; its full sequence is Large ribosomal subunit protein uL6 (178 aa).

It belongs to the universal ribosomal protein uL6 family. As to quaternary structure, part of the 50S ribosomal subunit.

Functionally, this protein binds to the 23S rRNA, and is important in its secondary structure. It is located near the subunit interface in the base of the L7/L12 stalk, and near the tRNA binding site of the peptidyltransferase center. The polypeptide is Large ribosomal subunit protein uL6 (Methanobrevibacter smithii (strain ATCC 35061 / DSM 861 / OCM 144 / PS)).